The primary structure comprises 257 residues: Small ribosomal subunit protein uS2 (257 aa).

The segment at 229 to 257 is disordered; the sequence is QFTPATTSSQEVDKASEQVEIAADDIDEE.

The protein belongs to the universal ribosomal protein uS2 family.

The polypeptide is Small ribosomal subunit protein uS2 (Caldicellulosiruptor bescii (strain ATCC BAA-1888 / DSM 6725 / KCTC 15123 / Z-1320) (Anaerocellum thermophilum)).